The sequence spans 202 residues: Small ribosomal subunit protein uS4 (202 aa).

Residues 93 to 156 form the S4 RNA-binding domain; that stretch reads RRLDNMVYRL…KDLKIISEAV (64 aa).

Belongs to the universal ribosomal protein uS4 family. Part of the 30S ribosomal subunit. Contacts protein S5. The interaction surface between S4 and S5 is involved in control of translational fidelity.

One of the primary rRNA binding proteins, it binds directly to 16S rRNA where it nucleates assembly of the body of the 30S subunit. Functionally, with S5 and S12 plays an important role in translational accuracy. This chain is Small ribosomal subunit protein uS4, found in Pediococcus pentosaceus (strain ATCC 25745 / CCUG 21536 / LMG 10740 / 183-1w).